Reading from the N-terminus, the 113-residue chain is Protein AaeX (113 aa).

Helical transmembrane passes span 3 to 23 (LLPVMVIFGLSFPPVLFEMIL) and 43 to 63 (FVWHPALFNTALYCCVFYLIS).

This sequence belongs to the AaeX family.

It localises to the cell membrane. The chain is Protein AaeX from Sodalis glossinidius (strain morsitans).